Here is a 140-residue protein sequence, read N- to C-terminus: Acyl-coenzyme A thioesterase 13 (140 aa).

Met1 bears the N-acetylmethionine mark. Residues Lys27, Lys37, and Lys43 each carry the N6-acetyllysine modification. Position 46 (Glu46) interacts with CoA. Substrate is bound by residues Asn50 and Gly81. Residues Ser83, 90–95, and 108–113 each bind CoA; these read YMSPAK and KQGKTL. N6-acetyllysine is present on residues Lys108 and Lys127. His137 serves as a coordination point for CoA.

The protein belongs to the thioesterase PaaI family. In terms of assembly, homotetramer. Interacts with PCTP. In terms of tissue distribution, highly expressed in the kidney and moderately in the heart, liver, brain, small and large intestine. Also expressed in brown adipose tissue.

It is found in the cytoplasm. Its subcellular location is the cytosol. The protein resides in the mitochondrion. The protein localises to the nucleus. It localises to the cytoskeleton. It is found in the spindle. The enzyme catalyses a fatty acyl-CoA + H2O = a fatty acid + CoA + H(+). It catalyses the reaction decanoyl-CoA + H2O = decanoate + CoA + H(+). It carries out the reaction octanoyl-CoA + H2O = octanoate + CoA + H(+). The catalysed reaction is butanoyl-CoA + H2O = butanoate + CoA + H(+). The enzyme catalyses hexanoyl-CoA + H2O = hexanoate + CoA + H(+). It catalyses the reaction tetradecanoyl-CoA + H2O = tetradecanoate + CoA + H(+). It carries out the reaction hexadecanoyl-CoA + H2O = hexadecanoate + CoA + H(+). The catalysed reaction is dodecanoyl-CoA + H2O = dodecanoate + CoA + H(+). The enzyme catalyses (9Z)-octadecenoyl-CoA + H2O = (9Z)-octadecenoate + CoA + H(+). Catalyzes the hydrolysis of acyl-CoAs into free fatty acids and coenzyme A (CoASH), regulating their respective intracellular levels. Has acyl-CoA thioesterase activity towards medium (C12) and long-chain (C18) fatty acyl-CoA substrates. Can also hydrolyze 3-hydroxyphenylacetyl-CoA and 3,4-dihydroxyphenylacetyl-CoA (in vitro). May play a role in controlling adaptive thermogenesis. The sequence is that of Acyl-coenzyme A thioesterase 13 from Mus musculus (Mouse).